The following is a 347-amino-acid chain: Protein RecA (347 aa).

Position 67-74 (67-74 (GPESSGKT)) interacts with ATP.

This sequence belongs to the RecA family.

It localises to the cytoplasm. Its function is as follows. Can catalyze the hydrolysis of ATP in the presence of single-stranded DNA, the ATP-dependent uptake of single-stranded DNA by duplex DNA, and the ATP-dependent hybridization of homologous single-stranded DNAs. It interacts with LexA causing its activation and leading to its autocatalytic cleavage. This chain is Protein RecA, found in Paenarthrobacter aurescens (strain TC1).